A 1691-amino-acid polypeptide reads, in one-letter code: ADAMTS-like protein 3 (1691 aa).

The N-terminal stretch at 1-26 (MASWTSPWWVLIGMVFMHSPLPQTTA) is a signal peptide. The TSP type-1 1 domain occupies 75–124 (DGNWDAWGDWSDCSRTCGGGASYSLRRCLTGRNCEGQNIRYKTCSNHDCP). 3 disulfide bridges follow: cysteine 87-cysteine 118, cysteine 91-cysteine 123, and cysteine 102-cysteine 108. Asparagine 293 is a glycosylation site (N-linked (GlcNAc...) asparagine). TSP type-1 domains lie at 418 to 468 (PLPR…APKP), 478 to 535 (DCPK…IPCY), and 564 to 626 (EEPT…EACD). Intrachain disulfides connect cysteine 576–cysteine 620, cysteine 580–cysteine 625, and cysteine 591–cysteine 609. Residue asparagine 681 is glycosylated (N-linked (GlcNAc...) asparagine). 3 consecutive TSP type-1 domains span residues 703 to 760 (CPPR…FDCP), 763 to 818 (WHIE…ARTD), and 819 to 881 (CPPH…PECS). The N-linked (GlcNAc...) asparagine glycan is linked to asparagine 797. 3 cysteine pairs are disulfide-bonded: cysteine 831/cysteine 875, cysteine 835/cysteine 880, and cysteine 846/cysteine 863. One can recognise an Ig-like C2-type 1 domain in the interval 896–992 (PQILSVQRVY…IAGSAQETVV (97 aa)). 2 N-linked (GlcNAc...) asparagine glycosylation sites follow: asparagine 915 and asparagine 927. Cysteine 934 and cysteine 982 are disulfide-bonded. Asparagine 1102 carries N-linked (GlcNAc...) asparagine glycosylation. The interval 1146–1184 (PPAAQLRGETGSVSQSSHAKNSGKLTFKPKGPVLMRQSQ) is disordered. Residues 1156–1169 (GSVSQSSHAKNSGK) are compositionally biased toward polar residues. The Ig-like C2-type 2 domain occupies 1185–1279 (PPSISFNKTI…GSDVESSSVL (95 aa)). An N-linked (GlcNAc...) asparagine glycan is attached at asparagine 1191. Cysteines 1215 and 1263 form a disulfide. Asparagine 1292, asparagine 1316, asparagine 1330, asparagine 1343, asparagine 1349, asparagine 1356, asparagine 1432, asparagine 1516, asparagine 1574, and asparagine 1591 each carry an N-linked (GlcNAc...) asparagine glycan. Positions 1296-1378 (PEHNHLSVVV…ATNALGKAVA (83 aa)) constitute an Ig-like C2-type 3 domain. The cysteines at positions 1321 and 1367 are disulfide-linked. 2 consecutive TSP type-1 domains span residues 1424 to 1482 (QEPF…NIRD) and 1483 to 1545 (CPAR…HPCV). A TSP type-1 10 domain is found at 1597 to 1644 (CDVCWHTGPWKPCTAACGRGFQSRKVDCIHTRSCKPVAKRHCVQKKKP). The 37-residue stretch at 1655 to 1691 (CDRDCTDTTHYCMFVKHLNLCSLDRYKQRCCQSCQEG) folds into the PLAC domain.

In terms of processing, glycosylated. Can be O-fucosylated by POFUT2 on a serine or a threonine residue found within the consensus sequence C1-X(2)-(S/T)-C2-G of the TSP type-1 repeat domains where C1 and C2 are the first and second cysteine residue of the repeat, respectively. Fucosylated repeats can then be further glycosylated by the addition of a beta-1,3-glucose residue by the glucosyltransferase, B3GALTL. Fucosylation mediates the efficient secretion of ADAMTS family members. Can also be C-glycosylated with one or two mannose molecules on tryptophan residues within the consensus sequence W-X-X-W of the TPRs, and N-glycosylated. These other glycosylations can also facilitate secretion. Expressed in epithelial cells of the colon, fallopian tube, skin, breast, prostate, epididymis, liver, pancreatic islets and bile ducts, as well as by vascular endothelial cells, smooth muscle cells, fibroblasts, cortical and ganglionic neurons and cardiac myocytes. Also expressed by malignant epithelial cells in colon cancer, as well as breast, prostate, renal and skin tumors. Expression is significantly reduced in colon cancer compared to normal colon.

Its subcellular location is the secreted. The protein localises to the extracellular space. It localises to the extracellular matrix. The polypeptide is ADAMTS-like protein 3 (ADAMTSL3) (Homo sapiens (Human)).